A 95-amino-acid chain; its full sequence is Costars family protein WS02710_H03 (95 aa).

The protein belongs to the costars family.

In Picea sitchensis (Sitka spruce), this protein is Costars family protein WS02710_H03.